We begin with the raw amino-acid sequence, 172 residues long: Nicotinamide-nucleotide adenylyltransferase (172 aa).

This sequence belongs to the archaeal NMN adenylyltransferase family.

It localises to the cytoplasm. The enzyme catalyses beta-nicotinamide D-ribonucleotide + ATP + H(+) = diphosphate + NAD(+). The protein operates within cofactor biosynthesis; NAD(+) biosynthesis; NAD(+) from nicotinamide D-ribonucleotide: step 1/1. The polypeptide is Nicotinamide-nucleotide adenylyltransferase (Aeropyrum pernix (strain ATCC 700893 / DSM 11879 / JCM 9820 / NBRC 100138 / K1)).